Consider the following 523-residue polypeptide: Light-independent protochlorophyllide reductase subunit B (523 aa).

Residue Asp36 participates in [4Fe-4S] cluster binding. Residue Asp290 is the Proton donor of the active site. 425 to 426 (GL) is a binding site for substrate.

This sequence belongs to the ChlB/BchB/BchZ family. As to quaternary structure, protochlorophyllide reductase is composed of three subunits; ChlL, ChlN and ChlB. Forms a heterotetramer of two ChlB and two ChlN subunits. [4Fe-4S] cluster serves as cofactor.

It catalyses the reaction chlorophyllide a + oxidized 2[4Fe-4S]-[ferredoxin] + 2 ADP + 2 phosphate = protochlorophyllide a + reduced 2[4Fe-4S]-[ferredoxin] + 2 ATP + 2 H2O. The protein operates within porphyrin-containing compound metabolism; chlorophyll biosynthesis (light-independent). Its function is as follows. Component of the dark-operative protochlorophyllide reductase (DPOR) that uses Mg-ATP and reduced ferredoxin to reduce ring D of protochlorophyllide (Pchlide) to form chlorophyllide a (Chlide). This reaction is light-independent. The NB-protein (ChlN-ChlB) is the catalytic component of the complex. The sequence is that of Light-independent protochlorophyllide reductase subunit B from Prochlorococcus marinus (strain MIT 9301).